The primary structure comprises 480 residues: Probable pectin lyase F-2 (480 aa).

Positions 1-25 (MTLIRTVLMAAALLGASAHAQGVVG) are cleaved as a signal peptide. Residues Cys-83 and Cys-106 are joined by a disulfide bond. An N-linked (GlcNAc...) asparagine glycan is attached at Asn-111. The active site involves Arg-256. A disulfide bond links Cys-322 and Cys-330. The span at 386 to 401 (SSSAIPSSTPAPSSSA) shows a compositional bias: low complexity. A disordered region spans residues 386 to 436 (SSSAIPSSTPAPSSSALAKRHGGHDRHGLGHIPHLTEGGPGAWHTPGPAPS).

This sequence belongs to the polysaccharide lyase 1 family.

It localises to the secreted. It catalyses the reaction Eliminative cleavage of (1-&gt;4)-alpha-D-galacturonan methyl ester to give oligosaccharides with 4-deoxy-6-O-methyl-alpha-D-galact-4-enuronosyl groups at their non-reducing ends.. In terms of biological role, pectinolytic enzymes consist of four classes of enzymes: pectin lyase, polygalacturonase, pectin methylesterase and rhamnogalacturonase. Among pectinolytic enzymes, pectin lyase is the most important in depolymerization of pectin, since it cleaves internal glycosidic bonds of highly methylated pectins. In Aspergillus terreus (strain NIH 2624 / FGSC A1156), this protein is Probable pectin lyase F-2 (pelF-2).